Here is a 336-residue protein sequence, read N- to C-terminus: Ketol-acid reductoisomerase (NADP(+)) (336 aa).

Positions 5-185 (SKIYTDKDSN…GATRAGVIPT (181 aa)) constitute a KARI N-terminal Rossmann domain. NADP(+) contacts are provided by residues 28 to 31 (YGSQ), Ser-56, and 86 to 89 (DMVQ). Residue His-111 is part of the active site. Gly-137 serves as a coordination point for NADP(+). Residues 186-331 (TFKEETETDL…NQLKDLIQKG (146 aa)) enclose the KARI C-terminal knotted domain. Residues Asp-194, Glu-198, Glu-230, and Glu-234 each contribute to the Mg(2+) site. Position 255 (Ser-255) interacts with substrate.

It belongs to the ketol-acid reductoisomerase family. Requires Mg(2+) as cofactor.

The enzyme catalyses (2R)-2,3-dihydroxy-3-methylbutanoate + NADP(+) = (2S)-2-acetolactate + NADPH + H(+). The catalysed reaction is (2R,3R)-2,3-dihydroxy-3-methylpentanoate + NADP(+) = (S)-2-ethyl-2-hydroxy-3-oxobutanoate + NADPH + H(+). Its pathway is amino-acid biosynthesis; L-isoleucine biosynthesis; L-isoleucine from 2-oxobutanoate: step 2/4. It participates in amino-acid biosynthesis; L-valine biosynthesis; L-valine from pyruvate: step 2/4. Its function is as follows. Involved in the biosynthesis of branched-chain amino acids (BCAA). Catalyzes an alkyl-migration followed by a ketol-acid reduction of (S)-2-acetolactate (S2AL) to yield (R)-2,3-dihydroxy-isovalerate. In the isomerase reaction, S2AL is rearranged via a Mg-dependent methyl migration to produce 3-hydroxy-3-methyl-2-ketobutyrate (HMKB). In the reductase reaction, this 2-ketoacid undergoes a metal-dependent reduction by NADPH to yield (R)-2,3-dihydroxy-isovalerate. The protein is Ketol-acid reductoisomerase (NADP(+)) of Saccharolobus islandicus (strain Y.N.15.51 / Yellowstone #2) (Sulfolobus islandicus).